The chain runs to 475 residues: 3-isopropylmalate dehydratase large subunit (475 aa).

[4Fe-4S] cluster contacts are provided by cysteine 348, cysteine 408, and cysteine 411.

The protein belongs to the aconitase/IPM isomerase family. LeuC type 1 subfamily. As to quaternary structure, heterodimer of LeuC and LeuD. [4Fe-4S] cluster serves as cofactor.

It catalyses the reaction (2R,3S)-3-isopropylmalate = (2S)-2-isopropylmalate. It participates in amino-acid biosynthesis; L-leucine biosynthesis; L-leucine from 3-methyl-2-oxobutanoate: step 2/4. Its function is as follows. Catalyzes the isomerization between 2-isopropylmalate and 3-isopropylmalate, via the formation of 2-isopropylmaleate. The sequence is that of 3-isopropylmalate dehydratase large subunit from Acidobacterium capsulatum (strain ATCC 51196 / DSM 11244 / BCRC 80197 / JCM 7670 / NBRC 15755 / NCIMB 13165 / 161).